A 103-amino-acid chain; its full sequence is Large ribosomal subunit protein bL21 (103 aa).

Belongs to the bacterial ribosomal protein bL21 family. Part of the 50S ribosomal subunit. Contacts protein L20.

This protein binds to 23S rRNA in the presence of protein L20. The sequence is that of Large ribosomal subunit protein bL21 from Salmonella paratyphi A (strain ATCC 9150 / SARB42).